A 339-amino-acid chain; its full sequence is Ketol-acid reductoisomerase (NADP(+)) (339 aa).

A KARI N-terminal Rossmann domain is found at 1–182; it reads MKIYYEKDAD…GNTRAGVIET (182 aa). NADP(+) contacts are provided by residues 24–27, serine 51, serine 53, and 83–86; these read YGSQ and DEKQ. Histidine 108 is a catalytic residue. Glycine 134 is an NADP(+) binding site. Residues 183–328 enclose the KARI C-terminal knotted domain; it reads SFREETETDL…EKLRGMMHWA (146 aa). 4 residues coordinate Mg(2+): aspartate 191, glutamate 195, glutamate 227, and glutamate 231. Serine 252 serves as a coordination point for substrate.

Belongs to the ketol-acid reductoisomerase family. Mg(2+) serves as cofactor.

It carries out the reaction (2R)-2,3-dihydroxy-3-methylbutanoate + NADP(+) = (2S)-2-acetolactate + NADPH + H(+). The catalysed reaction is (2R,3R)-2,3-dihydroxy-3-methylpentanoate + NADP(+) = (S)-2-ethyl-2-hydroxy-3-oxobutanoate + NADPH + H(+). It participates in amino-acid biosynthesis; L-isoleucine biosynthesis; L-isoleucine from 2-oxobutanoate: step 2/4. It functions in the pathway amino-acid biosynthesis; L-valine biosynthesis; L-valine from pyruvate: step 2/4. Involved in the biosynthesis of branched-chain amino acids (BCAA). Catalyzes an alkyl-migration followed by a ketol-acid reduction of (S)-2-acetolactate (S2AL) to yield (R)-2,3-dihydroxy-isovalerate. In the isomerase reaction, S2AL is rearranged via a Mg-dependent methyl migration to produce 3-hydroxy-3-methyl-2-ketobutyrate (HMKB). In the reductase reaction, this 2-ketoacid undergoes a metal-dependent reduction by NADPH to yield (R)-2,3-dihydroxy-isovalerate. This Hyphomonas neptunium (strain ATCC 15444) protein is Ketol-acid reductoisomerase (NADP(+)).